The chain runs to 166 residues: Short form salivary protein D7R1 (166 aa).

Positions 1-21 (MFRKVFSVALVTCGLLVIVQA) are cleaved as a signal peptide.

The protein belongs to the PBP/GOBP family. Interacts with host coagulation factor XII (F12) (inactive and activated) (via amino acids 1-77). Interacts with host high molecular weight kininogen (KNG1) (via amino acids 402-532). As to expression, female salivary gland (at protein level).

It is found in the secreted. With respect to regulation, zn(2+) modulates binding to host coagulation factor XII (F12) and high molecular weight kininogen (KNG1). Functionally, salivary protein with anticoagulant activity that targets the intrinsic blood coagulation pathway in the host. Inhibits activation of the host plasma contact system by preventing the reciprocal activation of host coagulation factor XII (F12) and prekallikrein (KLKB1). Attenuates generation of bradykinin in host plasma. May bind and sequester different mediators involved in the host response, such as serotonin and histamine. The sequence is that of Short form salivary protein D7R1 from Anopheles stephensi (Indo-Pakistan malaria mosquito).